Here is a 104-residue protein sequence, read N- to C-terminus: MAVRKLWKTVVQLFSKSKSEECNTEAGTMEVSFLKYGVRGLNADCSYVKSQCIKLSECECLYTFASDVCKEDFHNSEEMKVFVVQHSQEMVDGTDLFVHAEESV.

The polypeptide is Protein U9 (U9) (Homo sapiens (Human)).